Reading from the N-terminus, the 139-residue chain is Large-conductance mechanosensitive channel (139 aa).

Transmembrane regions (helical) follow at residues 19–39 and 81–101; these read VAVI…ADVI and GNFL…FMVV.

This sequence belongs to the MscL family. Homopentamer.

The protein localises to the cell inner membrane. Functionally, channel that opens in response to stretch forces in the membrane lipid bilayer. May participate in the regulation of osmotic pressure changes within the cell. This is Large-conductance mechanosensitive channel from Nitrobacter hamburgensis (strain DSM 10229 / NCIMB 13809 / X14).